The primary structure comprises 343 residues: MPIDCKAKCGNRASLKRPKTGDALCKDCFFAAFEAEIHHTITTSKLFRRGEKVAVAASGGKDSTVLAHVLKLLNERHNYGLDLVLLSIDEGITGYRDDSLETVKQNRDDYQMPLKILSYEELYGWTMDRIVAQIGRSNNCTFCGVFRRQALDRGAKLLGVDSIATGHNADDIAETVLMNILRGDTARLRRCTDIRTGGGEDSIPRVKPLKYSYEKEIVMYAHYKKLVYFSTECVFAPNAYRGHARAFLKDLEKVRPSVIMDIIYSGEQLRFKDTVKKPVRGNCERCGFVSSQQPCKACVLLEGLNRGLPKLGIGKKSKGDRMIAKQNQELALRERANLVKNDF.

The protein belongs to the TtcA family. CTU1/NCS6/ATPBD3 subfamily.

The protein localises to the cytoplasm. It functions in the pathway tRNA modification; 5-methoxycarbonylmethyl-2-thiouridine-tRNA biosynthesis. In terms of biological role, plays a central role in 2-thiolation of mcm(5)S(2)U at tRNA wobble positions of tRNA(Lys), tRNA(Glu) and tRNA(Gln). Directly binds tRNAs and probably acts by catalyzing adenylation of tRNAs, an intermediate required for 2-thiolation. It is unclear whether it acts as a sulfurtransferase that transfers sulfur from thiocarboxylated URM1 onto the uridine of tRNAs at wobble position. The sequence is that of Cytoplasmic tRNA 2-thiolation protein 1 from Drosophila mojavensis (Fruit fly).